Consider the following 382-residue polypeptide: D-galactonate dehydratase (382 aa).

A Mg(2+)-binding site is contributed by aspartate 183. Histidine 185 acts as the Proton donor in catalysis. Mg(2+) is bound by residues glutamate 209 and glutamate 235. Histidine 285 acts as the Proton acceptor in catalysis.

It belongs to the mandelate racemase/muconate lactonizing enzyme family. GalD subfamily. Mg(2+) serves as cofactor.

The catalysed reaction is D-galactonate = 2-dehydro-3-deoxy-D-galactonate + H2O. The protein operates within carbohydrate acid metabolism; D-galactonate degradation; D-glyceraldehyde 3-phosphate and pyruvate from D-galactonate: step 1/3. Catalyzes the dehydration of D-galactonate to 2-keto-3-deoxy-D-galactonate. The chain is D-galactonate dehydratase from Xanthomonas campestris pv. campestris (strain 8004).